A 593-amino-acid polypeptide reads, in one-letter code: Progranulin (593 aa).

The first 17 residues, M1–G17, serve as a signal peptide directing secretion. A glycan (N-linked (GlcNAc...) asparagine) is linked at N118. 2 disulfide bridges follow: C126–C139 and C133–C149. N-linked (GlcNAc...) asparagine glycosylation is found at N236 and N265. Intrachain disulfides connect C284-C296, C290-C306, C297-C314, C307-C321, C315-C328, C322-C335, C366-C378, C372-C388, C397-C410, and C404-C416. The N-linked (GlcNAc...) asparagine glycan is linked to N368. N-linked (GlcNAc...) asparagine glycosylation is present at N530.

The protein belongs to the granulin family. In terms of assembly, progranulin is secreted as a homodimer. Interacts with SLPI; interaction protects progranulin from proteolysis. Interacts (via region corresponding to granulin-7 peptide) with CTSD; stabilizes CTSD and increases its proteolytic activity. Interacts (via region corresponding to granulin-7 peptide) with SORT1; this interaction mediates endocytosis and lysosome delivery of progranulin; interaction occurs at the neuronal cell surface in a stressed nervous system. Interacts with PSAP; facilitates lysosomal delivery of progranulin from the extracellular space and the biosynthetic pathway. Forms a complex with PSAP and M6PR; PSAP bridges the binding between progranulin and M6PR. Forms a complex with PSAP and SORT1; progranulin bridges the interaction between PSAP and SORT1; facilitates lysosomal targeting of PSAP via SORT1; interaction enhances PSAP uptake in primary cortical neurons. Interacts (via regions corresponding to granulin-2 and granulin-7 peptides) with GBA1; this interaction prevents aggregation of GBA1-SCARB2 complex via interaction with HSPA1A upon stress. Interacts (via region corresponding to granulin-7 peptide) with HSPA1A; mediates recruitment of HSPA1A to GBA1 and prevents GBA1 aggregation in response to stress. Cleaved by ELANE; proteolysis is blocked by SLPI and is concentration- and time-dependent and induces CXCL8/IL-8 production; granulin-3 and granulin-4 are resistant to ELANE. Cleaved by CTSL in lysosome thus regulating the maturation and turnover of progranulin within the lysosome. As to expression, in myelogenous leukemic cell lines of promonocytic, promyelocytic, and proerythroid lineage, in fibroblasts, and very strongly in epithelial cell lines. Present in inflammatory cells and bone marrow. Highest levels in kidney.

It is found in the secreted. The protein localises to the lysosome. Its function is as follows. Secreted protein that acts as a key regulator of lysosomal function and as a growth factor involved in inflammation, wound healing and cell proliferation. Regulates protein trafficking to lysosomes, and also the activity of lysosomal enzymes. Also facilitates the acidification of lysosomes, causing degradation of mature CTSD by CTSB. In addition, functions as a wound-related growth factor that acts directly on dermal fibroblasts and endothelial cells to promote division, migration and the formation of capillary-like tubule structures. Also promotes epithelial cell proliferation by blocking TNF-mediated neutrophil activation preventing release of oxidants and proteases. Moreover, modulates inflammation in neurons by preserving neurons survival, axonal outgrowth and neuronal integrity. Promotes proliferation of the epithelial cell line A431 in culture. In terms of biological role, inhibits epithelial cell proliferation and induces epithelial cells to secrete IL-8. Functionally, stabilizes CTSD through interaction with CTSD leading to maintain its aspartic-type peptidase activity. In Homo sapiens (Human), this protein is Progranulin.